A 297-amino-acid polypeptide reads, in one-letter code: Myoblast determination protein 1 homolog (297 aa).

Positions 52–76 (KPEEHPHHHGHHHGHPHEEEHVRAP) are disordered. Residues 101-152 (DRRKAATMRERRRLSKVNEAFETLKRCTSTNPNQRLPKVEILRNAIRYIESL) enclose the bHLH domain. Disordered stretches follow at residues 171–221 (SGES…GKSS) and 243–297 (CPIL…YQVL). Composition is skewed to polar residues over residues 174–184 (SDASSPRSNCS) and 258–297 (CSPQ…YQVL).

As to quaternary structure, efficient DNA binding requires dimerization with another bHLH protein. Seems to form active heterodimers with ITF-2.

Its subcellular location is the nucleus. In terms of biological role, acts as a transcriptional activator that promotes transcription of muscle-specific target genes and plays a role in muscle differentiation. Induces fibroblasts to differentiate into myoblasts. Interacts with and is inhibited by the twist protein. This interaction probably involves the basic domains of both proteins. The protein is Myoblast determination protein 1 homolog (MYOD1) of Coturnix japonica (Japanese quail).